The primary structure comprises 415 residues: 4-hydroxy-3-methylbut-2-en-1-yl diphosphate synthase (flavodoxin) (415 aa).

Residues cysteine 298, cysteine 301, cysteine 344, and glutamate 351 each coordinate [4Fe-4S] cluster.

It belongs to the IspG family. It depends on [4Fe-4S] cluster as a cofactor.

The catalysed reaction is (2E)-4-hydroxy-3-methylbut-2-enyl diphosphate + oxidized [flavodoxin] + H2O + 2 H(+) = 2-C-methyl-D-erythritol 2,4-cyclic diphosphate + reduced [flavodoxin]. It participates in isoprenoid biosynthesis; isopentenyl diphosphate biosynthesis via DXP pathway; isopentenyl diphosphate from 1-deoxy-D-xylulose 5-phosphate: step 5/6. Its function is as follows. Converts 2C-methyl-D-erythritol 2,4-cyclodiphosphate (ME-2,4cPP) into 1-hydroxy-2-methyl-2-(E)-butenyl 4-diphosphate. This chain is 4-hydroxy-3-methylbut-2-en-1-yl diphosphate synthase (flavodoxin), found in Solibacter usitatus (strain Ellin6076).